A 212-amino-acid chain; its full sequence is Uracil phosphoribosyltransferase (212 aa).

5-phospho-alpha-D-ribose 1-diphosphate-binding positions include R78, R103, and 130-138 (DPMLATGSS). Residues I193 and 198-200 (GDA) contribute to the uracil site. D199 lines the 5-phospho-alpha-D-ribose 1-diphosphate pocket.

The protein belongs to the UPRTase family. Mg(2+) is required as a cofactor.

The enzyme catalyses UMP + diphosphate = 5-phospho-alpha-D-ribose 1-diphosphate + uracil. The protein operates within pyrimidine metabolism; UMP biosynthesis via salvage pathway; UMP from uracil: step 1/1. With respect to regulation, allosterically activated by GTP. Functionally, catalyzes the conversion of uracil and 5-phospho-alpha-D-ribose 1-diphosphate (PRPP) to UMP and diphosphate. The sequence is that of Uracil phosphoribosyltransferase from Pseudomonas fluorescens (strain ATCC BAA-477 / NRRL B-23932 / Pf-5).